The primary structure comprises 105 residues: Death-associated protein 1 homolog (105 aa).

The tract at residues 75–105 (AAQVAHQKPVPSAQKLPAGQHLNQHIHQPRK) is disordered. The segment covering 95–105 (HLNQHIHQPRK) has biased composition (polar residues).

It belongs to the DAP-DAPL1 family. In terms of assembly, associates with ribosomes; inhibiting translation. Interacts with eiF5a (eif5a and eif5a2); inhibiting translation.

In terms of biological role, ribosome-binding protein involved in ribosome hibernation, a process during which ribosomes are stabilized in an inactive state and preserved from proteasomal degradation. Acts via its association with eiF5a (eif5a and eif5a2) at the polypeptide exit tunnel of the ribosome, preventing mRNA translation. Involved in ribosome hibernation in the mature egg by preventing mRNA translation, leading to ribosome inactivation. Ribosomes, which are produced in large quantities during oogenesis, are stored and translationally repressed in the egg and early embryo. Compared to dap1b, binds and inactivates ribosomes less efficiently. This chain is Death-associated protein 1 homolog, found in Danio rerio (Zebrafish).